Consider the following 731-residue polypeptide: Beta-galactosidase (731 aa).

A signal peptide spans 1–23 (MGVGIQTMWSILLLFSCIFSAAS). Glu-182 functions as the Proton donor in the catalytic mechanism. Glu-251 functions as the Nucleophile in the catalytic mechanism. N-linked (GlcNAc...) asparagine glycosylation is present at Asn-459.

The protein belongs to the glycosyl hydrolase 35 family.

It is found in the secreted. The protein resides in the extracellular space. It localises to the apoplast. The enzyme catalyses Hydrolysis of terminal non-reducing beta-D-galactose residues in beta-D-galactosides.. Its function is as follows. Involved in cell wall degradation. Degrades polysaccharides containing beta-(1--&gt;4)-linked galactans, acting as an exo-(1--&gt;4)-beta-D-galactanase. The sequence is that of Beta-galactosidase from Malus domestica (Apple).